Here is a 189-residue protein sequence, read N- to C-terminus: Cancer/testis antigen family 45 member A1 (189 aa).

Basic and acidic residues predominate over residues 1–23 (MTDKTEKVAVDPETVFKRPRECD). 2 disordered regions span residues 1–27 (MTDK…SPSY) and 83–118 (RMMQ…SPKS).

It belongs to the CT45 family. In terms of tissue distribution, testis specific. Expressed in cancer cell lines.

It localises to the nucleus. This is Cancer/testis antigen family 45 member A1 from Homo sapiens (Human).